Reading from the N-terminus, the 209-residue chain is Large ribosomal subunit protein uL4 (209 aa).

Positions 47 to 72 are disordered; sequence TSSTKTRSEVRGSSKKPWKQKGTGRA. Residues 59-72 are compositionally biased toward basic residues; it reads SSKKPWKQKGTGRA.

Belongs to the universal ribosomal protein uL4 family. As to quaternary structure, part of the 50S ribosomal subunit.

Its function is as follows. One of the primary rRNA binding proteins, this protein initially binds near the 5'-end of the 23S rRNA. It is important during the early stages of 50S assembly. It makes multiple contacts with different domains of the 23S rRNA in the assembled 50S subunit and ribosome. In terms of biological role, forms part of the polypeptide exit tunnel. The chain is Large ribosomal subunit protein uL4 from Borreliella burgdorferi (strain ZS7) (Borrelia burgdorferi).